The primary structure comprises 667 residues: UvrABC system protein B (667 aa).

In terms of domain architecture, Helicase ATP-binding spans 25–414; the sequence is TGLQRGDKHQ…GVVVEQIIRP (390 aa). 38 to 45 provides a ligand contact to ATP; sequence GVTGSGKT. The short motif at 91–114 is the Beta-hairpin element; it reads YYDYYQPEAYVPTTDTFIEKDSSI. The region spanning 430–596 is the Helicase C-terminal domain; sequence QVDDLIHEIR…TVKKSLRSIL (167 aa). A UVR domain is found at 624-659; the sequence is KNEIARVKEEMLAAAANLEFEKAAELRDRMLELDKL.

This sequence belongs to the UvrB family. Forms a heterotetramer with UvrA during the search for lesions. Interacts with UvrC in an incision complex.

It localises to the cytoplasm. The UvrABC repair system catalyzes the recognition and processing of DNA lesions. A damage recognition complex composed of 2 UvrA and 2 UvrB subunits scans DNA for abnormalities. Upon binding of the UvrA(2)B(2) complex to a putative damaged site, the DNA wraps around one UvrB monomer. DNA wrap is dependent on ATP binding by UvrB and probably causes local melting of the DNA helix, facilitating insertion of UvrB beta-hairpin between the DNA strands. Then UvrB probes one DNA strand for the presence of a lesion. If a lesion is found the UvrA subunits dissociate and the UvrB-DNA preincision complex is formed. This complex is subsequently bound by UvrC and the second UvrB is released. If no lesion is found, the DNA wraps around the other UvrB subunit that will check the other stand for damage. This is UvrABC system protein B from Syntrophotalea carbinolica (strain DSM 2380 / NBRC 103641 / GraBd1) (Pelobacter carbinolicus).